A 486-amino-acid chain; its full sequence is 2-succinylbenzoate--CoA ligase (486 aa).

This sequence belongs to the ATP-dependent AMP-binding enzyme family. MenE subfamily.

It catalyses the reaction 2-succinylbenzoate + ATP + CoA = 2-succinylbenzoyl-CoA + AMP + diphosphate. Its pathway is quinol/quinone metabolism; 1,4-dihydroxy-2-naphthoate biosynthesis; 1,4-dihydroxy-2-naphthoate from chorismate: step 5/7. The protein operates within quinol/quinone metabolism; menaquinone biosynthesis. Converts 2-succinylbenzoate (OSB) to 2-succinylbenzoyl-CoA (OSB-CoA). This is 2-succinylbenzoate--CoA ligase from Bacillus subtilis (strain 168).